The sequence spans 1085 residues: Kinesin-like protein cut7 (1085 aa).

The tract at residues 1 to 70 (MAPRVAPGGS…TDHALHDENE (70 aa)) is disordered. The segment covering 24–37 (PVSTPNSHFRSASN) has biased composition (polar residues). Residues 72-421 (NINVVVRVRG…LEYAARAKSI (350 aa)) form the Kinesin motor domain. Residue 159–166 (GQTGTGKT) participates in ATP binding. 3 coiled-coil regions span residues 436–604 (LIKD…WNLK), 715–740 (ISSE…LRSL), and 897–955 (LALA…DSIK). Repeats lie at residues 987-998 (DESLCNLETTIE) and 999-1010 (DTSLVKLETTGD). At Thr1011 the chain carries Phosphothreonine; by CDC2. Residues 1049-1085 (YTSSNQTNEPDVYDKPSNSSRTSLLRSSRSAYSKMKR) form a disordered region. The span at 1065–1078 (SNSSRTSLLRSSRS) shows a compositional bias: low complexity.

It belongs to the TRAFAC class myosin-kinesin ATPase superfamily. Kinesin family. BimC subfamily.

It is found in the cytoplasm. It localises to the cytoskeleton. The protein localises to the microtubule organizing center. Its subcellular location is the spindle pole body. Could be a spindle pole body motor. On transition from G2 to M phase of the cell cycle, the spindle pole body duplicates; the daughter pole bodies seed microtubules which interdigitate to form a short spindle that elongates to span the nucleus at metaphase. Mutations at cut7 block spindle formation. This Schizosaccharomyces pombe (strain 972 / ATCC 24843) (Fission yeast) protein is Kinesin-like protein cut7 (cut7).